The primary structure comprises 501 residues: Dynein regulatory complex subunit 5 (501 aa).

Residues 1–23 are compositionally biased toward polar residues; it reads MQDTVTTSALLDPSHSSVSTQDN. 2 disordered regions span residues 1-56 and 202-222; these read MQDT…HPRA and LPAQLRPGDQSDSGSEGEMEE. Positions 24 to 34 are enriched in low complexity; that stretch reads SSTGGHTSSTS. LRR repeat units follow at residues 308–321, 335–355, 363–383, 391–411, and 419–439; these read VLEELDLSQNLIGD, RLRVLNLANNQVRAPGAQSLA, NLISLNLRLNCIEDEGGQALA, CLTTLHLGGNELSEPTATLLS, and TLTSINLSCNHIGLDGGKQLL.

This sequence belongs to the DRC5 family. As to quaternary structure, component of the nexin-dynein regulatory complex (N-DRC). Interacts with DRC1. Interacts with FBXL13/DRC6, DRC3 and DRC7.

It is found in the cell projection. The protein localises to the cilium. Its subcellular location is the flagellum. The protein resides in the cytoplasm. It localises to the cytoskeleton. It is found in the flagellum axoneme. Functionally, component of the nexin-dynein regulatory complex (N-DRC) a key regulator of ciliary/flagellar motility which maintains the alignment and integrity of the distal axoneme and regulates microtubule sliding in motile axonemes. May play a role in the assembly of N-DRC. May be required for sperm motility. The chain is Dynein regulatory complex subunit 5 (TCTE1) from Homo sapiens (Human).